A 102-amino-acid chain; its full sequence is uncharacterized protein (102 aa).

Residues 5–27 (IYRSNLVIVITLFVSLSYYHTCF) form a helical membrane-spanning segment.

Its subcellular location is the host membrane. This is an uncharacterized protein from Microplitis demolitor (Parasitoid wasp).